The sequence spans 498 residues: ATP synthase subunit beta, chloroplastic (498 aa).

An ATP-binding site is contributed by 172–179 (GGAGVGKT).

Belongs to the ATPase alpha/beta chains family. In terms of assembly, F-type ATPases have 2 components, CF(1) - the catalytic core - and CF(0) - the membrane proton channel. CF(1) has five subunits: alpha(3), beta(3), gamma(1), delta(1), epsilon(1). CF(0) has four main subunits: a(1), b(1), b'(1) and c(9-12).

Its subcellular location is the plastid. The protein resides in the chloroplast thylakoid membrane. The catalysed reaction is ATP + H2O + 4 H(+)(in) = ADP + phosphate + 5 H(+)(out). Functionally, produces ATP from ADP in the presence of a proton gradient across the membrane. The catalytic sites are hosted primarily by the beta subunits. This chain is ATP synthase subunit beta, chloroplastic, found in Oenothera biennis (German evening primrose).